A 63-amino-acid polypeptide reads, in one-letter code: Large ribosomal subunit protein bL28 (63 aa).

Belongs to the bacterial ribosomal protein bL28 family.

This is Large ribosomal subunit protein bL28 from Alkaliphilus metalliredigens (strain QYMF).